Here is a 435-residue protein sequence, read N- to C-terminus: Chaperone SurA (435 aa).

The signal sequence occupies residues 1-24; the sequence is MRLRSFAFLGFMLLVAMAPSMASA. PpiC domains follow at residues 173–274 and 286–385; these read DTAY…KLID and VTEN…ELED.

The protein resides in the periplasm. It catalyses the reaction [protein]-peptidylproline (omega=180) = [protein]-peptidylproline (omega=0). Functionally, chaperone involved in the correct folding and assembly of outer membrane proteins. Recognizes specific patterns of aromatic residues and the orientation of their side chains, which are found more frequently in integral outer membrane proteins. May act in both early periplasmic and late outer membrane-associated steps of protein maturation. The polypeptide is Chaperone SurA (Chromohalobacter salexigens (strain ATCC BAA-138 / DSM 3043 / CIP 106854 / NCIMB 13768 / 1H11)).